The primary structure comprises 111 residues: Cell cycle protein GpsB (111 aa).

Residues 32–63 adopt a coiled-coil conformation; that stretch reads LDDIMKDYDAYEAIIKELKGEIARLKAQAANS. The disordered stretch occupies residues 59–80; it reads QAANSPKTTLPTEESNDVLRTE. Positions 60–71 are enriched in polar residues; sequence AANSPKTTLPTE.

The protein belongs to the GpsB family. Forms polymers through the coiled coil domains. Interacts with PBP1, MreC and EzrA.

The protein resides in the cytoplasm. Its function is as follows. Divisome component that associates with the complex late in its assembly, after the Z-ring is formed, and is dependent on DivIC and PBP2B for its recruitment to the divisome. Together with EzrA, is a key component of the system that regulates PBP1 localization during cell cycle progression. Its main role could be the removal of PBP1 from the cell pole after pole maturation is completed. Also contributes to the recruitment of PBP1 to the division complex. Not essential for septum formation. The chain is Cell cycle protein GpsB from Streptococcus suis (strain 98HAH33).